Consider the following 84-residue polypeptide: Large ribosomal subunit protein bL27 (84 aa).

The segment at 1–25 (MAHKKAGGSSKNGRDSAGKRLGVKR) is disordered.

The protein belongs to the bacterial ribosomal protein bL27 family.

The polypeptide is Large ribosomal subunit protein bL27 (Syntrophotalea carbinolica (strain DSM 2380 / NBRC 103641 / GraBd1) (Pelobacter carbinolicus)).